The following is a 163-amino-acid chain: Inorganic pyrophosphatase (163 aa).

Position 8 (Glu8) interacts with Mg(2+). The substrate site is built by Lys16, Arg30, and Tyr42. 4 residues coordinate Mg(2+): Asp52, Asp57, Asp84, and Asp89. Asp89 serves as the catalytic Proton acceptor. Residue Tyr126 coordinates substrate.

It belongs to the PPase family. As to quaternary structure, homohexamer. It depends on Mg(2+) as a cofactor.

It is found in the cytoplasm. The catalysed reaction is diphosphate + H2O = 2 phosphate + H(+). Its function is as follows. Catalyzes the hydrolysis of inorganic pyrophosphate (PPi) forming two phosphate ions. This chain is Inorganic pyrophosphatase, found in Streptomyces coelicolor (strain ATCC BAA-471 / A3(2) / M145).